Consider the following 523-residue polypeptide: GMP synthase [glutamine-hydrolyzing] (523 aa).

The Glutamine amidotransferase type-1 domain maps to 9 to 198 (PVLVVDFGAQ…LTEIAGLEQN (190 aa)). The active-site Nucleophile is the Cys86. Residues His172 and Glu174 contribute to the active site. A GMPS ATP-PPase domain is found at 199 to 397 (WTAANIAEEL…LGLPEEIVGR (199 aa)). 227–233 (SGGVDSA) is an ATP binding site.

In terms of assembly, homodimer.

It catalyses the reaction XMP + L-glutamine + ATP + H2O = GMP + L-glutamate + AMP + diphosphate + 2 H(+). It functions in the pathway purine metabolism; GMP biosynthesis; GMP from XMP (L-Gln route): step 1/1. Functionally, catalyzes the synthesis of GMP from XMP. The polypeptide is GMP synthase [glutamine-hydrolyzing] (Corynebacterium glutamicum (strain R)).